The primary structure comprises 69 residues: Small archaeal modifier protein 2 (69 aa).

Lys55 participates in a covalent cross-link: Glycyl lysine isopeptide (Lys-Gly) (interchain with G-Cter in SAMP2). The residue at position 69 (Gly69) is a 1-thioglycine; alternate. The residue at position 69 (Gly69) is a Glycyl adenylate; alternate. Gly69 participates in a covalent cross-link: Glycyl lysine isopeptide (Gly-Lys) (interchain with K-? in acceptor proteins); alternate.

In terms of processing, the C-terminal glycine is likely acyl-adenylated (-COAMP) by UbaA, and also probably thiocarboxylated (-COSH) to function in sulfur transfer.

Functionally, functions as a protein modifier covalently attached to lysine residues of substrate proteins, as well as a sulfur carrier in tRNA thiolation. The protein modification process is termed sampylation and involves the formation of an isopeptide bond between the SAMP2 C-terminal glycine carboxylate and the epsilon-amino group of lysine residues on target proteins. Is able to form polymeric chains with itself likely at Lys-55, similar to ubiquitin and other ubiquitin-like proteins. May serve as a proteolytic signal in the cell to target proteins for degradation by proteasomes. This chain is Small archaeal modifier protein 2, found in Pyrococcus furiosus (strain ATCC 43587 / DSM 3638 / JCM 8422 / Vc1).